We begin with the raw amino-acid sequence, 630 residues long: Plastin-3 (630 aa).

EF-hand domains are found at residues Asp-12–Pro-47 and Lys-52–Ser-87. Ca(2+)-binding residues include Asp-25, Asn-27, Asn-29, Glu-36, Asp-65, Asn-67, Asp-69, Lys-71, and Glu-76. Actin-binding stretches follow at residues Thr-109–Lys-382 and Pro-383–Met-627. Calponin-homology (CH) domains lie at Glu-123 to Leu-239 and Leu-267 to Pro-378. 4 positions are modified to phosphoserine: Ser-268, Ser-293, Ser-326, and Ser-339. Phosphothreonine is present on Thr-391. 2 Calponin-homology (CH) domains span residues Thr-397 to Thr-506 and Lys-518 to Met-627.

In terms of assembly, monomer. In terms of tissue distribution, expressed in a variety of organs, including muscle, brain, uterus and esophagus.

The protein resides in the cytoplasm. Functionally, actin-bundling protein. This is Plastin-3 (PLS3) from Homo sapiens (Human).